Here is a 450-residue protein sequence, read N- to C-terminus: FAD-linked oxidoreductase penO (450 aa).

Residues 32–203 (PPELPYAIVK…TRFFIRTRPA (172 aa)) enclose the FAD-binding PCMH-type domain.

It belongs to the oxygen-dependent FAD-linked oxidoreductase family. It depends on FAD as a cofactor.

It functions in the pathway secondary metabolite biosynthesis. Its function is as follows. FAD-linked oxidoreductase; part of the gene cluster that mediates the biosynthesis of the indole diterpenes penitrems. The geranylgeranyl diphosphate (GGPP) synthase penG catalyzes the first step in penitrem biosynthesis via conversion of farnesyl pyrophosphate and isopentyl pyrophosphate into geranylgeranyl pyrophosphate (GGPP). Condensation of indole-3-glycerol phosphate with GGPP by the prenyl transferase penC then forms 3-geranylgeranylindole (3-GGI). Epoxidation by the FAD-dependent monooxygenase penM leads to a epoxidized-GGI that is substrate of the terpene cyclase penB for cyclization to yield paspaline. Paspaline is subsequently converted to 13-desoxypaxilline by the cytochrome P450 monooxygenase penP, the latter being then converted to paxilline by the cytochrome P450 monooxygenase penQ. Paxilline is converted to beta-paxitriol via C-10 ketoreduction by the short-chain dehydrogenase PC-15 which can be monoprenylated at the C-20 by the indole diterpene prenyltransferase penD. A two-step elimination (acetylation and elimination) process performed by the O-acetyltransferase PC-16 and the P.simplicissimum ptmI-ortholog not yet identified in P.crustosum, leads to the production of the prenylated form of penijanthine. The FAD-linked oxidoreductase ptmO then converts the prenylated form of penijanthine into PC-M5 which is in turn transformed into PC-M4 by the aromatic dimethylallyltransferase PC-22. A series of oxidation steps involving 4 cytochrome P450 monooxygenases (PC-21, PC-05, PC-23, PC-20) and a FAD-dependent monooxygenase (PC-14) are required for the transformation of PC-M4 to penitrems A and E. Synthesis of these final products is proposed to proceed via penitrems D and C (PC-21, PC-05, PC-14) and penitrems B and F (PC-21, PC-05, PC-14, PC-23). The chain is FAD-linked oxidoreductase penO from Penicillium crustosum (Blue mold fungus).